A 2710-amino-acid chain; its full sequence is Serine/threonine-protein kinase ATR (2710 aa).

One can recognise an FAT domain in the interval 1647-2257 (TLAKASFRCQ…LWMMAAVSKS (611 aa)). Residues 2368–2680 (IADDAEILNS…GVNAAPSLPL (313 aa)) form the PI3K/PI4K catalytic domain. The segment at 2374–2380 (ILNSLQK) is G-loop. The segment at 2545–2553 (GLGDRHGEN) is catalytic loop. Positions 2565-2589 (HVDFSCLFDKGLLLEKPEVVPFRFT) are activation loop. The FATC domain maps to 2678–2710 (LPLSVEGQARRLIAEAVSHSNLGKMYVWWMAWF).

This sequence belongs to the PI3/PI4-kinase family. ATM subfamily.

The protein resides in the nucleus. The enzyme catalyses L-seryl-[protein] + ATP = O-phospho-L-seryl-[protein] + ADP + H(+). It carries out the reaction L-threonyl-[protein] + ATP = O-phospho-L-threonyl-[protein] + ADP + H(+). In terms of biological role, probable serine/threonine kinase. Seems to play a central role in cell-cycle regulation by transmitting DNA damage signals to downstream effectors of cell-cycle progression. May recognize the substrate consensus sequence [ST]-Q and phosphorylate histone variant H2AX to form H2AXS139ph at sites of DNA damage, thereby regulating DNA damage response mechanism. This chain is Serine/threonine-protein kinase ATR, found in Oryza sativa subsp. japonica (Rice).